The sequence spans 255 residues: Proteasome subunit alpha (255 aa).

Residues Arg-224–Gly-255 are disordered.

This sequence belongs to the peptidase T1A family. The 20S proteasome core is composed of 14 alpha and 14 beta subunits that assemble into four stacked heptameric rings, resulting in a barrel-shaped structure. The two inner rings, each composed of seven catalytic beta subunits, are sandwiched by two outer rings, each composed of seven alpha subunits. The catalytic chamber with the active sites is on the inside of the barrel. Has a gated structure, the ends of the cylinder being occluded by the N-termini of the alpha-subunits. Is capped by the proteasome-associated ATPase, ARC.

It localises to the cytoplasm. Its pathway is protein degradation; proteasomal Pup-dependent pathway. Its activity is regulated as follows. The formation of the proteasomal ATPase ARC-20S proteasome complex, likely via the docking of the C-termini of ARC into the intersubunit pockets in the alpha-rings, may trigger opening of the gate for substrate entry. Interconversion between the open-gate and close-gate conformations leads to a dynamic regulation of the 20S proteasome proteolysis activity. In terms of biological role, component of the proteasome core, a large protease complex with broad specificity involved in protein degradation. This Nocardioides sp. (strain ATCC BAA-499 / JS614) protein is Proteasome subunit alpha.